A 458-amino-acid polypeptide reads, in one-letter code: Delta(8)-fatty-acid desaturase (458 aa).

Residues lysine 16–serine 100 form the Cytochrome b5 heme-binding domain. The heme site is built by histidine 51 and histidine 74. Transmembrane regions (helical) follow at residues glycine 122 to leucine 142 and phenylalanine 147 to leucine 167. A Histidine box-1 motif is present at residues histidine 169 to histidine 173. A helical transmembrane segment spans residues phenylalanine 185–threonine 205. Positions histidine 206–histidine 210 match the Histidine box-2 motif. 3 consecutive transmembrane segments (helical) span residues tyrosine 264–isoleucine 284, glycine 293–leucine 313, and valine 320–asparagine 340. Residues glutamine 383–histidine 387 carry the Histidine box-3 motif.

It belongs to the fatty acid desaturase type 1 family. Fe cation serves as cofactor.

It localises to the membrane. It catalyses the reaction an N-acyl-(4R)-4-hydroxysphinganine + 2 Fe(II)-[cytochrome b5] + O2 + 2 H(+) = a (4R,8E)-4-hydroxysphingenine ceramide + 2 Fe(III)-[cytochrome b5] + 2 H2O. It carries out the reaction an N-acyl-(4R)-4-hydroxysphinganine + 2 Fe(II)-[cytochrome b5] + O2 + 2 H(+) = a (4R,8Z)-4-hydroxysphing-8-enine ceramide + 2 Fe(III)-[cytochrome b5] + 2 H2O. In terms of biological role, plays a major role as delta(8)-fatty-acid desaturase which introduces a double bond at the 8-position in the long-chain base (LCB) of ceramides with or without a hydroxy group at the 4-position. The enzyme produces both the 8E and 8Z isomers. This structural modification contributes to the quantitative partitioning of ceramides between the two major sphingolipid classes, glucosylceramides and glycosylinositolphosphoryl ceramides. Sphingolipids are important membrane components involved in environmental stress responses, such as resistance to chilling, and act as cell signaling molecules. This chain is Delta(8)-fatty-acid desaturase (sld1), found in Helianthus annuus (Common sunflower).